Reading from the N-terminus, the 280-residue chain is Alpha-aminoadipate--LysW ligase LysX (280 aa).

ATP contacts are provided by residues Lys89, Lys129, 133–139 (GSWGRLL), 169–180 (QEYVEKPGRDIR), Arg194, and Asn202. Positions 93-276 (SVALAKAGLP…IPGEILKYAW (184 aa)) constitute an ATP-grasp domain. The Mg(2+) site is built by Asp237, Glu249, and Asn251. Residues 258–259 (NS) carry the N-[TS] motif that is essential for LysX substrate specificity motif.

This sequence belongs to the RimK family. LysX subfamily. As to quaternary structure, homodimer. Requires Mg(2+) as cofactor.

The enzyme catalyses [amino-group carrier protein]-C-terminal-L-glutamate + L-2-aminoadipate + ATP = [amino-group carrier protein]-C-terminal-N-(1,4-dicarboxybutan-1-yl)-L-glutamine + ADP + phosphate + H(+). Its pathway is amino-acid biosynthesis; L-lysine biosynthesis via AAA pathway; L-lysine from L-alpha-aminoadipate (Thermus route): step 1/5. In terms of biological role, catalyzes the ATP-dependent formation of a covalent bond between the amino group of alpha-aminoadipate (AAA) and the gamma-carboxyl group of the C-terminal glutamate residue in LysW. This is Alpha-aminoadipate--LysW ligase LysX (lysX) from Thermus thermophilus (strain ATCC 27634 / DSM 579 / HB8).